The following is a 438-amino-acid chain: Protein maelstrom 1 (438 aa).

The HMG box DNA-binding region spans 2–69 (APKKRNGFMT…LERTAKKERL (68 aa)). The disordered stretch occupies residues 374 to 438 (KEMGSRDLSP…NMGAGKKIAR (65 aa)). A compositionally biased stretch (polar residues) spans 381 to 391 (LSPSSSHQSVS).

The protein belongs to the maelstrom family.

The protein resides in the cytoplasm. The protein localises to the nucleus. Functionally, involved both in the piRNA and miRNA metabolic processes. As a component of the meiotic nuage, plays a central role during oogenesis by repressing transposable elements and preventing their mobilization, which is essential for the germline integrity. Repression of transposable elements is mediated via the piRNA metabolic process, which mediates the repression of transposable elements during meiosis by forming complexes composed of piRNAs and Piwi proteins and governs the repression of transposons. As a nuclear component, it is required for proper differentiation in the germline stem cell (GSC) lineage by repressing microRNA-7 (miR-7), thereby acting as an indirect regulator of bag-of-marbles (Bam). Acts by binding to the promoter of miR-7 gene and repressing its expression; miR-7 repression alleviates the Bam repression by miR-7, thereby allowing differentiation in the germline stem cell (GSC) lineage. The protein is Protein maelstrom 1 (mael1) of Drosophila persimilis (Fruit fly).